We begin with the raw amino-acid sequence, 196 residues long: MPIGVPKVPFRSPGEGDTSWVDIYNRLYRERLFFLGQEVDTEISNQLISLMIYLSIEKDTKDLYLFINSPGGWVISGMAIYDTMQFVRPDVQTICMGLAASIASFILVGGEITKRIAFPHARVMIHQPASSFYEAQTGEFILEAEELLKLRETITRVYVQRTGKPIWVVSEDMERDVFMSATEAQAHGIVDLVAVQ.

The Nucleophile role is filled by Ser101. The active site involves His126.

The protein belongs to the peptidase S14 family. Component of the chloroplastic Clp protease core complex.

The protein localises to the plastid. Its subcellular location is the chloroplast stroma. The enzyme catalyses Hydrolysis of proteins to small peptides in the presence of ATP and magnesium. alpha-casein is the usual test substrate. In the absence of ATP, only oligopeptides shorter than five residues are hydrolyzed (such as succinyl-Leu-Tyr-|-NHMec, and Leu-Tyr-Leu-|-Tyr-Trp, in which cleavage of the -Tyr-|-Leu- and -Tyr-|-Trp bonds also occurs).. Its function is as follows. Cleaves peptides in various proteins in a process that requires ATP hydrolysis. Has a chymotrypsin-like activity. Plays a major role in the degradation of misfolded proteins. The protein is ATP-dependent Clp protease proteolytic subunit of Lobularia maritima (Sweet alyssum).